Reading from the N-terminus, the 517-residue chain is GTPase Obg (517 aa).

The Obg domain maps to 2-159; that stretch reads ATFVDTVTLH…GDVVLELKVV (158 aa). The region spanning 160 to 336 is the OBG-type G domain; sequence ADVALVGYPS…LSFALAELVK (177 aa). GTP contacts are provided by residues 166-173, 191-195, 212-215, 288-291, and 317-319; these read GYPSAGKS, FTTLH, DVPG, NKID, and STV. Mg(2+) contacts are provided by S173 and T193. The OCT domain occupies 355–439; it reads PRAVDEKPFT…GDGVVFDWEP (85 aa). The tract at residues 490–517 is disordered; sequence EGEAGLWADEDGTGQDGTDEDATTDAKA. Acidic residues predominate over residues 497 to 517; that stretch reads ADEDGTGQDGTDEDATTDAKA.

This sequence belongs to the TRAFAC class OBG-HflX-like GTPase superfamily. OBG GTPase family. In terms of assembly, monomer. The cofactor is Mg(2+).

The protein localises to the cytoplasm. An essential GTPase which binds GTP, GDP and possibly (p)ppGpp with moderate affinity, with high nucleotide exchange rates and a fairly low GTP hydrolysis rate. Plays a role in control of the cell cycle, stress response, ribosome biogenesis and in those bacteria that undergo differentiation, in morphogenesis control. This chain is GTPase Obg, found in Clavibacter sepedonicus (Clavibacter michiganensis subsp. sepedonicus).